The chain runs to 606 residues: Threonine--tRNA ligase (606 aa).

Positions 212 to 503 (DHRKLGVEMK…LLEHTAGELP (292 aa)) are catalytic. The Zn(2+) site is built by Cys-304, His-355, and His-480.

It belongs to the class-II aminoacyl-tRNA synthetase family. Homodimer. It depends on Zn(2+) as a cofactor.

The protein resides in the cytoplasm. The enzyme catalyses tRNA(Thr) + L-threonine + ATP = L-threonyl-tRNA(Thr) + AMP + diphosphate + H(+). Its function is as follows. Catalyzes the attachment of threonine to tRNA(Thr) in a two-step reaction: L-threonine is first activated by ATP to form Thr-AMP and then transferred to the acceptor end of tRNA(Thr). Also edits incorrectly charged L-seryl-tRNA(Thr). The polypeptide is Threonine--tRNA ligase (Campylobacter concisus (strain 13826)).